Reading from the N-terminus, the 195-residue chain is CASP-like protein 2C2 (195 aa).

Over methionine 1 to arginine 18 the chain is Cytoplasmic. A helical transmembrane segment spans residues leucine 19–alanine 39. The Extracellular segment spans residues glutamate 40–glutamine 57. Residues alanine 58–valine 78 traverse the membrane as a helical segment. Residues arginine 79 to alanine 106 lie on the Cytoplasmic side of the membrane. Residues tyrosine 107–valine 127 form a helical membrane-spanning segment. Residues glutamate 128–glutamine 145 lie on the Extracellular side of the membrane. The helical transmembrane segment at alanine 146–phenylalanine 166 threads the bilayer. At serine 167–histidine 195 the chain is on the cytoplasmic side.

The protein belongs to the Casparian strip membrane proteins (CASP) family. As to quaternary structure, homodimer and heterodimers.

The protein resides in the cell membrane. This is CASP-like protein 2C2 from Oryza sativa subsp. japonica (Rice).